Here is a 345-residue protein sequence, read N- to C-terminus: GTPase Obg (345 aa).

The Obg domain maps to 1–158 (MFIDSVKITL…RLVRLELKLI (158 aa)). Residues 159 to 339 (ADVGLVGFPN…LKFMLLEEIK (181 aa)) enclose the OBG-type G domain. GTP is bound by residues 165–172 (GFPNVGKS), 190–194 (FTTLT), 212–215 (DIPG), 280–283 (SKSD), and 320–322 (SSL). 2 residues coordinate Mg(2+): Ser-172 and Thr-192.

Belongs to the TRAFAC class OBG-HflX-like GTPase superfamily. OBG GTPase family. In terms of assembly, monomer. Requires Mg(2+) as cofactor.

It localises to the cytoplasm. Its function is as follows. An essential GTPase which binds GTP, GDP and possibly (p)ppGpp with moderate affinity, with high nucleotide exchange rates and a fairly low GTP hydrolysis rate. Plays a role in control of the cell cycle, stress response, ribosome biogenesis and in those bacteria that undergo differentiation, in morphogenesis control. This Campylobacter jejuni subsp. jejuni serotype O:6 (strain 81116 / NCTC 11828) protein is GTPase Obg.